Here is a 219-residue protein sequence, read N- to C-terminus: 7-cyano-7-deazaguanine synthase (219 aa).

ATP is bound at residue F11–L21. The Zn(2+) site is built by C188, C196, C199, and C202.

This sequence belongs to the QueC family. It depends on Zn(2+) as a cofactor.

The enzyme catalyses 7-carboxy-7-deazaguanine + NH4(+) + ATP = 7-cyano-7-deazaguanine + ADP + phosphate + H2O + H(+). Its pathway is purine metabolism; 7-cyano-7-deazaguanine biosynthesis. Catalyzes the ATP-dependent conversion of 7-carboxy-7-deazaguanine (CDG) to 7-cyano-7-deazaguanine (preQ(0)). The protein is 7-cyano-7-deazaguanine synthase of Glaesserella parasuis serovar 5 (strain SH0165) (Haemophilus parasuis).